Consider the following 103-residue polypeptide: Large ribosomal subunit protein eL14 (103 aa).

This sequence belongs to the eukaryotic ribosomal protein eL14 family.

This Pyrobaculum islandicum (strain DSM 4184 / JCM 9189 / GEO3) protein is Large ribosomal subunit protein eL14.